Reading from the N-terminus, the 150-residue chain is Macrodomain Ter protein (150 aa).

Belongs to the MatP family. As to quaternary structure, homodimer.

It localises to the cytoplasm. Its function is as follows. Required for spatial organization of the terminus region of the chromosome (Ter macrodomain) during the cell cycle. Prevents early segregation of duplicated Ter macrodomains during cell division. Binds specifically to matS, which is a 13 bp signature motif repeated within the Ter macrodomain. This Escherichia coli O6:K15:H31 (strain 536 / UPEC) protein is Macrodomain Ter protein.